We begin with the raw amino-acid sequence, 96 residues long: UPF0213 protein BCE_0033 (96 aa).

A GIY-YIG domain is found at 4 to 79 (NKHCFYVVEC…KQLNRKQKEE (76 aa)).

The protein belongs to the UPF0213 family.

The chain is UPF0213 protein BCE_0033 from Bacillus cereus (strain ATCC 10987 / NRS 248).